We begin with the raw amino-acid sequence, 76 residues long: Esculentin-2MT3 (76 aa).

The first 22 residues, 1 to 22 (MFTLKKSMLLLFFLGTISLSLC), serve as a signal peptide directing secretion. The propeptide at 23–37 (EEERNADEDDGEKEV) is removed in mature form. A disulfide bridge connects residues cysteine 70 and cysteine 76.

The protein belongs to the frog skin active peptide (FSAP) family. Esculentin subfamily. As to expression, expressed by the skin glands.

The protein resides in the secreted. Functionally, antimicrobial peptide. This Amolops mantzorum (Sichuan torrent frog) protein is Esculentin-2MT3.